The following is a 390-amino-acid chain: Elongation factor Ts, mitochondrial (390 aa).

This sequence belongs to the EF-Ts family.

It localises to the mitochondrion. Associates with the EF-Tu.GDP complex and induces the exchange of GDP to GTP. It remains bound to the aminoacyl-tRNA.EF-Tu.GTP complex up to the GTP hydrolysis stage on the ribosome. The sequence is that of Elongation factor Ts, mitochondrial from Plasmodium falciparum (isolate 3D7).